A 358-amino-acid chain; its full sequence is MPAFADIAIDPPLADSYRALALLRRDRDGGIAPPAVQMVGSGGAVLERDLPMVDLERLTRGGAGERKACAGAMARAASEWGFFQLTNHGVGRELMEEMRREQARLFRLPFETKEKAGLLNGSYRWGNPTATSLRHLSWSEAFHVPLASISGADCDFGDLTSLRGVMQEVAEAMSRVANTVAAALAEELTGRGGGGASAAPWFPAGCDETTCFLRLNRYPACPFAADTFGLVPHTDSDFLTVLCQDQVGGLHLMKDSRWVAVRPRPDALVVNIGDLFQAWSNNRYKSVEHKVVANAKTDRLSVAYFLCPSYDSLVGTCGEPSPYRAFTFGEYRKKVQEDVRTTGKKIGLPNFFKHSSVQ.

Residues Asp207–Pro308 form the Fe2OG dioxygenase domain. Tyr218 serves as a coordination point for 2-oxoglutarate. His233, Asp235, and His289 together coordinate Fe cation. 2 residues coordinate 2-oxoglutarate: Arg299 and Ser301.

The protein belongs to the iron/ascorbate-dependent oxidoreductase family. GA2OX subfamily. L-ascorbate serves as cofactor. The cofactor is Fe(2+). As to expression, expressed in panicles. Expressed at low levels in young shoots, leaf blades and elongating internodes.

The protein localises to the cytoplasm. Its subcellular location is the nucleus. The catalysed reaction is gibberellin A1 + 2-oxoglutarate + O2 = gibberellin A8 + succinate + CO2. In terms of biological role, catalyzes the 2-beta-hydroxylation of several biologically active gibberellins, leading to the homeostatic regulation of their endogenous level. Catabolism of gibberellins (GAs) plays a central role in plant development. In vitro, converts GA12 and GA53 to the corresponding 2-beta-hydroxylated products GA110 and GA97, respectively. The protein is Gibberellin 2-beta-dioxygenase 6 of Oryza sativa subsp. japonica (Rice).